The following is a 499-amino-acid chain: Cytochrome P450 76T24 (499 aa).

A helical membrane pass occupies residues 3 to 23 (VDILLSLVLAFFGWAAIYFLT). 4 N-linked (GlcNAc...) asparagine glycosylation sites follow: asparagine 55, asparagine 76, asparagine 279, and asparagine 284. Position 442 (cysteine 442) interacts with heme.

This sequence belongs to the cytochrome P450 family.

The protein localises to the membrane. The polypeptide is Cytochrome P450 76T24 (Catharanthus roseus (Madagascar periwinkle)).